A 543-amino-acid chain; its full sequence is CTP synthase (543 aa).

The tract at residues 1-265 is amidoligase domain; it reads MTRYVFITGG…DREVLRHFGL (265 aa). A CTP-binding site is contributed by Ser13. Ser13 lines the UTP pocket. Residue 14 to 19 coordinates ATP; the sequence is SLGKGI. Tyr54 provides a ligand contact to L-glutamine. Asp71 lines the ATP pocket. Residues Asp71 and Glu139 each coordinate Mg(2+). Residues 146-148, 186-191, and Lys222 each bind CTP; these read DIE and KTKPTQ. UTP is bound by residues 186–191 and Lys222; that span reads KTKPTQ. ATP is bound at residue Val240. Positions 291–542 constitute a Glutamine amidotransferase type-1 domain; the sequence is TIAVVGKYTN…IEAAVKQMRL (252 aa). L-glutamine is bound at residue Gly353. The active-site Nucleophile; for glutamine hydrolysis is Cys380. L-glutamine contacts are provided by residues 381–384, Glu404, and Arg470; that span reads FGMQ. Active-site residues include His515 and Glu517.

It belongs to the CTP synthase family. As to quaternary structure, homotetramer.

It carries out the reaction UTP + L-glutamine + ATP + H2O = CTP + L-glutamate + ADP + phosphate + 2 H(+). It catalyses the reaction L-glutamine + H2O = L-glutamate + NH4(+). The catalysed reaction is UTP + NH4(+) + ATP = CTP + ADP + phosphate + 2 H(+). The protein operates within pyrimidine metabolism; CTP biosynthesis via de novo pathway; CTP from UDP: step 2/2. Its activity is regulated as follows. Allosterically activated by GTP, when glutamine is the substrate; GTP has no effect on the reaction when ammonia is the substrate. The allosteric effector GTP functions by stabilizing the protein conformation that binds the tetrahedral intermediate(s) formed during glutamine hydrolysis. Inhibited by the product CTP, via allosteric rather than competitive inhibition. Its function is as follows. Catalyzes the ATP-dependent amination of UTP to CTP with either L-glutamine or ammonia as the source of nitrogen. Regulates intracellular CTP levels through interactions with the four ribonucleotide triphosphates. The sequence is that of CTP synthase from Acidiphilium cryptum (strain JF-5).